We begin with the raw amino-acid sequence, 492 residues long: Transmembrane protease serine 2 (492 aa).

Over 1 to 84 (MALNSGSPPA…TVCTSKTKKA (84 aa)) the chain is Cytoplasmic. The chain crosses the membrane as a helical; Signal-anchor for type II membrane protein span at residues 85 to 105 (LCITLTLGTFLVGAALAAGLL). Over 106-492 (WKFMGSKCSN…WIYRQMRADG (387 aa)) the chain is Extracellular. Intrachain disulfides connect Cys-113/Cys-126, Cys-120/Cys-139, Cys-133/Cys-148, Cys-172/Cys-231, Cys-185/Cys-241, Cys-244/Cys-365, Cys-281/Cys-297, Cys-410/Cys-426, and Cys-437/Cys-465. The region spanning 118–148 (IECDSSGTCINPSNWCDGVSHCPGGEDENRC) is the LDL-receptor class A domain. Ca(2+) contacts are provided by Asn-131, Asp-134, Val-136, Asp-144, and Glu-145. Residues 149-242 (VRLYGPNFIL…SKAVVSLRCI (94 aa)) enclose the SRCR domain. N-linked (GlcNAc...) asparagine glycans are attached at residues Asn-213 and Asn-249. The Peptidase S1 domain occupies 256 to 492 (IVGGESALPG…WIYRQMRADG (237 aa)). Catalysis depends on charge relay system residues His-296 and Asp-345. The segment at 340-470 (KTKNNDIALM…WGSGCAKAYR (131 aa)) is HKU1-CoV S protein-binding. Ser-441 functions as the Charge relay system in the catalytic mechanism.

This sequence belongs to the peptidase S1 family. In terms of assembly, the catalytically active form interacts with ACE2. In terms of processing, proteolytically processed; by an autocatalytic mechanism. Autocleavage induces active conformation. As to expression, expressed in several tissues that comprise large populations of epithelial cells with the highest level of transcripts measured in the prostate gland. Expressed in type II pneumocytes in the lung (at protein level). Expressed strongly in small intestine. Also expressed in colon, stomach and salivary gland. Coexpressed with ACE2 within lung type II pneumocytes, ileal absorptive enterocytes, intestinal epithelial cells, cornea, gallbladder and nasal goblet secretory cells.

It localises to the cell membrane. Its subcellular location is the secreted. The catalysed reaction is The enzyme cleaves angiotensin-converting enzyme 2 (EC 3.4.17.23) and cleaves influenzea A and B virus and coronavirus spike glycoproteins at arginine residues.. Its function is as follows. Plasma membrane-anchored serine protease that cleaves at arginine residues. Participates in proteolytic cascades of relevance for the normal physiologic function of the prostate. Androgen-induced TMPRSS2 activates several substrates that include pro-hepatocyte growth factor/HGF, the protease activated receptor-2/F2RL1 or matriptase/ST14 leading to extracellular matrix disruption and metastasis of prostate cancer cells. In addition, activates trigeminal neurons and contribute to both spontaneous pain and mechanical allodynia. (Microbial infection) Facilitates human coronaviruses SARS-CoV and SARS-CoV-2 infections via two independent mechanisms, proteolytic cleavage of ACE2 receptor which promotes viral uptake, and cleavage of coronavirus spike glycoproteins which activates the glycoprotein for host cell entry. The cleavage of SARS-COV2 spike glycoprotein occurs between the S2 and S2' site. Upon SARS-CoV-2 infection, increases syncytia formation by accelerating the fusion process. Proteolytically cleaves and activates the spike glycoproteins of human coronavirus 229E (HCoV-229E) and human coronavirus EMC (HCoV-EMC) and the fusion glycoproteins F0 of Sendai virus (SeV), human metapneumovirus (HMPV), human parainfluenza 1, 2, 3, 4a and 4b viruses (HPIV). Essential for spread and pathogenesis of influenza A virus (strains H1N1, H3N2 and H7N9); involved in proteolytic cleavage and activation of hemagglutinin (HA) protein which is essential for viral infectivity. Functionally, (Microbial infection) Receptor for human coronavirus HKU1-CoV, acts synergistically with disialoside glycans to facilitate the entry of the virus. After binding to cell-surface disialoside glycans, the viral S protein interacts with the inactive form of TMPRSS2 and inhibits its protease activity. This Homo sapiens (Human) protein is Transmembrane protease serine 2.